The following is a 990-amino-acid chain: Glycine dehydrogenase (decarboxylating) (990 aa).

Lys726 carries the N6-(pyridoxal phosphate)lysine modification.

It belongs to the GcvP family. In terms of assembly, the glycine cleavage system is composed of four proteins: P, T, L and H. Pyridoxal 5'-phosphate is required as a cofactor.

The enzyme catalyses N(6)-[(R)-lipoyl]-L-lysyl-[glycine-cleavage complex H protein] + glycine + H(+) = N(6)-[(R)-S(8)-aminomethyldihydrolipoyl]-L-lysyl-[glycine-cleavage complex H protein] + CO2. The glycine cleavage system catalyzes the degradation of glycine. The P protein binds the alpha-amino group of glycine through its pyridoxal phosphate cofactor; CO(2) is released and the remaining methylamine moiety is then transferred to the lipoamide cofactor of the H protein. The polypeptide is Glycine dehydrogenase (decarboxylating) (Rhodopseudomonas palustris (strain ATCC BAA-98 / CGA009)).